Reading from the N-terminus, the 400-residue chain is S-adenosylmethionine synthase (400 aa).

Position 17 (H17) interacts with ATP. D19 is a binding site for Mg(2+). E45 serves as a coordination point for K(+). L-methionine contacts are provided by E58 and Q101. Residues 101-111 are flexible loop; that stretch reads QSADIAMGVDQ. ATP is bound by residues 177–179, 244–245, D253, 259–260, A276, and K280; these read DGK, RF, and RK. D253 is a binding site for L-methionine. K284 contacts L-methionine.

This sequence belongs to the AdoMet synthase family. As to quaternary structure, homotetramer; dimer of dimers. The cofactor is Mg(2+). It depends on K(+) as a cofactor.

It localises to the cytoplasm. The catalysed reaction is L-methionine + ATP + H2O = S-adenosyl-L-methionine + phosphate + diphosphate. It participates in amino-acid biosynthesis; S-adenosyl-L-methionine biosynthesis; S-adenosyl-L-methionine from L-methionine: step 1/1. Catalyzes the formation of S-adenosylmethionine (AdoMet) from methionine and ATP. The overall synthetic reaction is composed of two sequential steps, AdoMet formation and the subsequent tripolyphosphate hydrolysis which occurs prior to release of AdoMet from the enzyme. The protein is S-adenosylmethionine synthase of Bacillus velezensis (strain DSM 23117 / BGSC 10A6 / LMG 26770 / FZB42) (Bacillus amyloliquefaciens subsp. plantarum).